The following is a 177-amino-acid chain: MSELTTIARPYAKAAFDFAIEQNAVEKWANMLHFSSELIKDETMQTFLKSSLSASKLADTVISICGEQLDQYGQNLIRLMAENKRLEVLPAIYQAFQHYVEEHQKVAEVQVISAQPLNATQEQKIASAMEKRLARKVKLNCSLDSSLIAGVIIRTDDFVIDGSSRGQLSRLANELQL.

It belongs to the ATPase delta chain family. F-type ATPases have 2 components, F(1) - the catalytic core - and F(0) - the membrane proton channel. F(1) has five subunits: alpha(3), beta(3), gamma(1), delta(1), epsilon(1). F(0) has three main subunits: a(1), b(2) and c(10-14). The alpha and beta chains form an alternating ring which encloses part of the gamma chain. F(1) is attached to F(0) by a central stalk formed by the gamma and epsilon chains, while a peripheral stalk is formed by the delta and b chains.

The protein localises to the cell inner membrane. F(1)F(0) ATP synthase produces ATP from ADP in the presence of a proton or sodium gradient. F-type ATPases consist of two structural domains, F(1) containing the extramembraneous catalytic core and F(0) containing the membrane proton channel, linked together by a central stalk and a peripheral stalk. During catalysis, ATP synthesis in the catalytic domain of F(1) is coupled via a rotary mechanism of the central stalk subunits to proton translocation. Functionally, this protein is part of the stalk that links CF(0) to CF(1). It either transmits conformational changes from CF(0) to CF(1) or is implicated in proton conduction. The protein is ATP synthase subunit delta of Pasteurella multocida (strain Pm70).